Here is a 131-residue protein sequence, read N- to C-terminus: MVTLLTSPSCTSCRKAKAWLEEHDIPFEERNIFASPLSVEEVKQVVRMTEDGTDEIISTRSKVFQELDVELESLPLQKLFTIISDNPGLLRRPIIFDEKRLQVGYNDAEIRRFLPRKVRTFQLQEAQRLVN.

A disulfide bridge connects residues C10 and C13.

This sequence belongs to the ArsC family. Spx subfamily. In terms of assembly, interacts with the C-terminal domain of the alpha subunit of the RNAP.

The protein localises to the cytoplasm. In terms of biological role, global transcriptional regulator that plays a key role in stress response and exerts either positive or negative regulation of genes. Acts by interacting with the C-terminal domain of the alpha subunit of the RNA polymerase (RNAP). This interaction can enhance binding of RNAP to the promoter region of target genes and stimulate their transcription, or block interaction of RNAP with activator. This is Global transcriptional regulator Spx from Shouchella clausii (strain KSM-K16) (Alkalihalobacillus clausii).